A 439-amino-acid polypeptide reads, in one-letter code: Microfibrillar-associated protein 1 (439 aa).

Residues 1-17 (MSVPSSLMKQPPIQSTA) show a composition bias toward polar residues. Residues 1–200 (MSVPSSLMKQ…SEDEMEPRLK (200 aa)) are disordered. An N-acetylserine modification is found at Ser-2. A compositionally biased stretch (basic and acidic residues) spans 23–34 (RNEKGEISMEKV). 2 positions are modified to phosphoserine: Ser-52 and Ser-53. Residues 61–70 (QFIKKAKEQE) show a composition bias toward basic and acidic residues. Lys-67 participates in a covalent cross-link: Glycyl lysine isopeptide (Lys-Gly) (interchain with G-Cter in SUMO2). The segment covering 71-81 (AEPEEQEEDSS) has biased composition (acidic residues). A phosphoserine mark is found at Ser-94, Ser-116, Ser-118, Ser-132, and Ser-133. Composition is skewed to acidic residues over residues 112 to 122 (VVGESDSEVEG) and 131 to 144 (DSSE…DEEE). Residues 145–163 (IERRRGMMRQRAQERKNEE) are compositionally biased toward basic and acidic residues. Positions 178–195 (ESESESEYEEYTDSEDEM) are enriched in acidic residues. A Glycyl lysine isopeptide (Lys-Gly) (interchain with G-Cter in SUMO2) cross-link involves residue Lys-249. The residue at position 267 (Thr-267) is a Phosphothreonine. Lys-357 participates in a covalent cross-link: Glycyl lysine isopeptide (Lys-Gly) (interchain with G-Cter in SUMO2). The residue at position 361 (Ser-361) is a Phosphoserine. Residues Lys-371, Lys-381, Lys-415, and Lys-418 each participate in a glycyl lysine isopeptide (Lys-Gly) (interchain with G-Cter in SUMO2) cross-link. The residue at position 432 (Ser-432) is a Phosphoserine.

It belongs to the MFAP1 family. Component of the spliceosome B complex. Interacts with PRPF38A (via N-terminal interaction domain).

Its subcellular location is the nucleus. Its function is as follows. Involved in pre-mRNA splicing as a component of the spliceosome. The sequence is that of Microfibrillar-associated protein 1 from Bos taurus (Bovine).